A 184-amino-acid chain; its full sequence is UPF0669 protein C6orf120 homolog (184 aa).

The first 23 residues, 1–23 (MAAPWTGALLLLLASQAVSSAQA), serve as a signal peptide directing secretion. The N-linked (GlcNAc...) asparagine glycan is linked to Asn-47.

This sequence belongs to the UPF0669 family.

The protein resides in the secreted. Its function is as follows. May be involved in induction of apoptosis in CD4(+) T-cells, but not CD8(+) T-cells or hepatocytes. The sequence is that of UPF0669 protein C6orf120 homolog from Bos taurus (Bovine).